Here is a 220-residue protein sequence, read N- to C-terminus: Chaperone protein TorD (220 aa).

Belongs to the TorD/DmsD family. TorD subfamily.

The protein resides in the cytoplasm. Functionally, involved in the biogenesis of TorA. Acts on TorA before the insertion of the molybdenum cofactor and, as a result, probably favors a conformation of the apoenzyme that is competent for acquiring the cofactor. In Vibrio cholerae serotype O1 (strain ATCC 39541 / Classical Ogawa 395 / O395), this protein is Chaperone protein TorD.